Reading from the N-terminus, the 501-residue chain is Dipeptide and tripeptide permease A (501 aa).

The Cytoplasmic segment spans residues methionine 1–arginine 21. Residues alanine 22 to methionine 44 traverse the membrane as a helical segment. The Periplasmic segment spans residues alanine 45–serine 59. A helical transmembrane segment spans residues isoleucine 60 to leucine 80. At glycine 81–arginine 89 the chain is on the cytoplasmic side. Residues valine 90–histidine 110 traverse the membrane as a helical segment. Aspartate 111 is a topological domain (periplasmic). A helical membrane pass occupies residues alanine 112–asparagine 132. Topologically, residues proline 133–threonine 153 are cytoplasmic. A helical transmembrane segment spans residues methionine 154–alanine 174. Residues alanine 175 to glycine 178 lie on the Periplasmic side of the membrane. A helical membrane pass occupies residues tryptophan 179–phenylalanine 199. Residues cysteine 200 to methionine 218 lie on the Cytoplasmic side of the membrane. Residues glycine 219–leucine 239 form a helical membrane-spanning segment. The Periplasmic portion of the chain corresponds to histidine 240 to arginine 246. The chain crosses the membrane as a helical span at residues methionine 247–leucine 267. The Cytoplasmic segment spans residues lysine 268–lysine 274. Residues methionine 275–methionine 295 form a helical membrane-spanning segment. The Periplasmic segment spans residues proline 296 to glutamine 320. The chain crosses the membrane as a helical span at residues tyrosine 321 to asparagine 341. The Cytoplasmic portion of the chain corresponds to lysine 342–lysine 352. Residues phenylalanine 353–phenylalanine 373 traverse the membrane as a helical segment. Residues alanine 374 to asparagine 383 are Periplasmic-facing. A helical transmembrane segment spans residues tryptophan 384–leucine 404. The Cytoplasmic portion of the chain corresponds to alanine 405–arginine 414. Residues leucine 415 to glycine 435 form a helical membrane-spanning segment. Residues lysine 436–histidine 459 are Periplasmic-facing. A helical transmembrane segment spans residues valine 460–proline 480. At lysine 481–alanine 501 the chain is on the cytoplasmic side.

Belongs to the major facilitator superfamily. Proton-dependent oligopeptide transporter (POT/PTR) (TC 2.A.17) family. DtpA subfamily.

It is found in the cell inner membrane. Functionally, proton-dependent permease that transports di- and tripeptides. The polypeptide is Dipeptide and tripeptide permease A (Klebsiella pneumoniae (strain 342)).